The primary structure comprises 172 residues: RNA silencing suppressor p19 (172 aa).

A compositionally biased stretch (basic and acidic residues) spans 1–15 (MERAIQGNDAREQAY). Residues 1 to 37 (MERAIQGNDAREQAYGERWNGGSGSSTSPFKLPDESP) are disordered.

Belongs to the tombusvirus protein p19 family. In terms of assembly, homodimer.

Viral suppressor of RNA silencing which binds specifically to silencing RNAs (siRNAs). Acts as a molecular caliper to specifically select siRNAs based on the length of the duplex region of the RNA. The polypeptide is RNA silencing suppressor p19 (Capsicum annuum (Capsicum pepper)).